A 108-amino-acid chain; its full sequence is UPF0060 membrane protein YnfA (108 aa).

At 1–5 the chain is on the periplasmic side; sequence MIKTT. The helical transmembrane segment at 6–26 threads the bilayer; it reads LLFFATALCEIIGCFLPWLWL. The Cytoplasmic segment spans residues 27–30; sequence KRNA. A helical transmembrane segment spans residues 31-51; sequence SIWLLLPAGISLALFVWLLTL. Residues 52–60 lie on the Periplasmic side of the membrane; that stretch reads HPAASGRVY. The chain crosses the membrane as a helical span at residues 61 to 81; the sequence is AAYGGVYVCTALMWLRVVDGV. Residues 82–84 lie on the Cytoplasmic side of the membrane; that stretch reads KLT. The helical transmembrane segment at 85-105 threads the bilayer; the sequence is LYDWTGALIALCGMLIIVAGW. Topologically, residues 106–108 are periplasmic; the sequence is GRT.

This sequence belongs to the UPF0060 family.

The protein resides in the cell inner membrane. The protein is UPF0060 membrane protein YnfA of Escherichia coli O139:H28 (strain E24377A / ETEC).